Reading from the N-terminus, the 340-residue chain is Phosphoribosylformylglycinamidine cyclo-ligase (340 aa).

Belongs to the AIR synthase family.

The protein localises to the cytoplasm. The enzyme catalyses 2-formamido-N(1)-(5-O-phospho-beta-D-ribosyl)acetamidine + ATP = 5-amino-1-(5-phospho-beta-D-ribosyl)imidazole + ADP + phosphate + H(+). It functions in the pathway purine metabolism; IMP biosynthesis via de novo pathway; 5-amino-1-(5-phospho-D-ribosyl)imidazole from N(2)-formyl-N(1)-(5-phospho-D-ribosyl)glycinamide: step 2/2. This Crocosphaera subtropica (strain ATCC 51142 / BH68) (Cyanothece sp. (strain ATCC 51142)) protein is Phosphoribosylformylglycinamidine cyclo-ligase.